The following is a 201-amino-acid chain: Recombination protein RecR (201 aa).

The segment at Cys57–Cys72 adopts a C4-type zinc-finger fold. Positions Gly81–Pro176 constitute a Toprim domain.

Belongs to the RecR family.

Functionally, may play a role in DNA repair. It seems to be involved in an RecBC-independent recombinational process of DNA repair. It may act with RecF and RecO. This is Recombination protein RecR from Klebsiella pneumoniae subsp. pneumoniae (strain ATCC 700721 / MGH 78578).